The following is a 90-amino-acid chain: Mitochondrial import inner membrane translocase subunit Tim10 (90 aa).

The Twin CX3C motif motif lies at C29 to C54. 2 disulfides stabilise this stretch: C29/C54 and C33/C50.

This sequence belongs to the small Tim family. In terms of assembly, heterohexamer; composed of 3 copies of TIMM9 and 3 copies of TIMM10/TIM10A, named soluble 70 kDa complex. The complex forms a 6-bladed alpha-propeller structure and associates with the TIMM22 component of the TIM22 complex. Interacts with multi-pass transmembrane proteins in transit. Also forms a complex composed of TIMM9, TIMM10/TIM10A and FXC1/TIM10B.

It localises to the mitochondrion inner membrane. In terms of biological role, mitochondrial intermembrane chaperone that participates in the import and insertion of multi-pass transmembrane proteins into the mitochondrial inner membrane. May also be required for the transfer of beta-barrel precursors from the TOM complex to the sorting and assembly machinery (SAM complex) of the outer membrane. Acts as a chaperone-like protein that protects the hydrophobic precursors from aggregation and guide them through the mitochondrial intermembrane space. This is Mitochondrial import inner membrane translocase subunit Tim10 (TIMM10) from Bos taurus (Bovine).